Here is a 107-residue protein sequence, read N- to C-terminus: Anti-adapter protein IraM (107 aa).

The protein belongs to the IraM/RssC family.

The protein localises to the cytoplasm. In terms of biological role, inhibits RpoS proteolysis by regulating RssB activity, thereby increasing the stability of the sigma stress factor RpoS during magnesium starvation. The sequence is that of Anti-adapter protein IraM from Escherichia coli O17:K52:H18 (strain UMN026 / ExPEC).